A 401-amino-acid polypeptide reads, in one-letter code: tRNA(Met) cytidine acetate ligase (401 aa).

ATP is bound by residues 7–20, glycine 101, asparagine 160, and 185–186; these read IVEY…HLYH and RI.

This sequence belongs to the TmcAL family.

Its subcellular location is the cytoplasm. The enzyme catalyses cytidine(34) in elongator tRNA(Met) + acetate + ATP = N(4)-acetylcytidine(34) in elongator tRNA(Met) + AMP + diphosphate. In terms of biological role, catalyzes the formation of N(4)-acetylcytidine (ac(4)C) at the wobble position of elongator tRNA(Met), using acetate and ATP as substrates. First activates an acetate ion to form acetyladenylate (Ac-AMP) and then transfers the acetyl group to tRNA to form ac(4)C34. This chain is tRNA(Met) cytidine acetate ligase, found in Geobacillus sp. (strain WCH70).